Reading from the N-terminus, the 171-residue chain is S-ribosylhomocysteine lyase (171 aa).

Histidine 54, histidine 58, and cysteine 128 together coordinate Fe cation.

The protein belongs to the LuxS family. As to quaternary structure, homodimer. It depends on Fe cation as a cofactor.

The enzyme catalyses S-(5-deoxy-D-ribos-5-yl)-L-homocysteine = (S)-4,5-dihydroxypentane-2,3-dione + L-homocysteine. Its function is as follows. Involved in the synthesis of autoinducer 2 (AI-2) which is secreted by bacteria and is used to communicate both the cell density and the metabolic potential of the environment. The regulation of gene expression in response to changes in cell density is called quorum sensing. Catalyzes the transformation of S-ribosylhomocysteine (RHC) to homocysteine (HC) and 4,5-dihydroxy-2,3-pentadione (DPD). The sequence is that of S-ribosylhomocysteine lyase from Klebsiella pneumoniae (strain 342).